The chain runs to 382 residues: Chorismate synthase (382 aa).

Positions 39 and 45 each coordinate NADP(+). The disordered stretch occupies residues Ser89–Gly113. Residues Gly94 to His108 show a composition bias toward basic and acidic residues. FMN-binding positions include Arg128–Ser130, Gln246–Ala247, Ala290, Lys305–Thr309, and Arg331.

This sequence belongs to the chorismate synthase family. As to quaternary structure, homotetramer. The cofactor is FMNH2.

It catalyses the reaction 5-O-(1-carboxyvinyl)-3-phosphoshikimate = chorismate + phosphate. Its pathway is metabolic intermediate biosynthesis; chorismate biosynthesis; chorismate from D-erythrose 4-phosphate and phosphoenolpyruvate: step 7/7. Functionally, catalyzes the anti-1,4-elimination of the C-3 phosphate and the C-6 proR hydrogen from 5-enolpyruvylshikimate-3-phosphate (EPSP) to yield chorismate, which is the branch point compound that serves as the starting substrate for the three terminal pathways of aromatic amino acid biosynthesis. This reaction introduces a second double bond into the aromatic ring system. This Deinococcus radiodurans (strain ATCC 13939 / DSM 20539 / JCM 16871 / CCUG 27074 / LMG 4051 / NBRC 15346 / NCIMB 9279 / VKM B-1422 / R1) protein is Chorismate synthase.